Consider the following 268-residue polypeptide: Ribosomal RNA small subunit methyltransferase A (268 aa).

S-adenosyl-L-methionine contacts are provided by N11, L13, G37, E58, D86, and N104.

This sequence belongs to the class I-like SAM-binding methyltransferase superfamily. rRNA adenine N(6)-methyltransferase family. RsmA subfamily.

The protein localises to the cytoplasm. The enzyme catalyses adenosine(1518)/adenosine(1519) in 16S rRNA + 4 S-adenosyl-L-methionine = N(6)-dimethyladenosine(1518)/N(6)-dimethyladenosine(1519) in 16S rRNA + 4 S-adenosyl-L-homocysteine + 4 H(+). Specifically dimethylates two adjacent adenosines (A1518 and A1519) in the loop of a conserved hairpin near the 3'-end of 16S rRNA in the 30S particle. May play a critical role in biogenesis of 30S subunits. The chain is Ribosomal RNA small subunit methyltransferase A from Campylobacter fetus subsp. fetus (strain 82-40).